Consider the following 153-residue polypeptide: ORM1-like protein 2 (153 aa).

At 1-21 (MNVGVAHSEVNPNTRVMNSRG) the chain is on the cytoplasmic side. Transmembrane regions (helical) follow at residues 22 to 42 (IWLA…SIPF) and 43 to 63 (FSIP…TYVF). The Cytoplasmic portion of the chain corresponds to 64–105 (LHTVKGTPFETPDQGKARLLTHWEQMDYGLQFTSSRKFLSIS). Residues 106–126 (PIVLYLLASFYTKYDAAHFLI) form a helical membrane-spanning segment. The Extracellular portion of the chain corresponds to 127–153 (NTASLLSVLLPKLPQFHGVRVFGINKY).

The protein belongs to the ORM family. As to quaternary structure, ceramide-sensitive subunit of the serine palmitoyltransferase (SPT) complex, which is also composed of SPTLC1, SPTLC2/3 and SPTSSA/B. In terms of tissue distribution, widely expressed. Expressed in adult and fetal heart, brain, lung, liver, skeletal muscle and kidney. Expressed in adult pancreas and placenta and in fetal spleen abd thymus.

Its subcellular location is the endoplasmic reticulum membrane. In terms of biological role, plays an essential role in the homeostatic regulation of sphingolipid de novo biosynthesis by modulating the activity of the serine palmitoyltransferase (SPT) in response to ceramide levels. When complexed to SPT, the binding of ceramides to its N-terminus stabilizes a conformation that block SPT substrate entry, hence preventing SPT catalytic activity. Through this mechanism, maintains ceramide levels at sufficient concentrations for the production of complex sphingolipids, but which prevents the accumulation of ceramides to levels that trigger apoptosis. This Homo sapiens (Human) protein is ORM1-like protein 2 (ORMDL2).